The chain runs to 290 residues: Secreted chorismate mutase (290 aa).

A signal peptide spans 1–21 (MKLSVSIFVLLAVSAFGGGSA). Residues 117-140 (VVLSRDTVLDKPVVGKGIFPIGRR) are KWL1-binding extensive loop region (ELR). N-linked (GlcNAc...) asparagine glycosylation is found at Asn-159 and Asn-208.

Homodimer. Forms a heterodimer with the host cytosolic chorismate mutase CM2. Interacts with the host kiwellin KWL1 which acts as a defense protein that protects maize from infection.

The protein localises to the secreted. The protein resides in the host cytoplasm. It localises to the host cytosol. The catalysed reaction is chorismate = prephenate. Its activity is regulated as follows. Contrary to classical chorismate mutases, CMU1 is not subject to allosteric regulation by tryptophan and tyrosine. Activity is decreased in a non-competitive and allosteric manner by the binding of the host defense kiwellin KWL1 which probably blocks substrate access to the active site of CMU1. In terms of biological role, secreted chorismate mutase that is one component of a cocktail of effectors shaping the host metabolome and acting as virulence factors. The enzyme is taken up by plant cells, can spread to neighboring cells where it affects the biosynthesis of the plant immune signal salicylic acid by channelling chorismate into the phenylpropanoid pathway. Interferes with the activity of host cytosolic chorismate mutase CM2 through heterodimerization. The sequence is that of Secreted chorismate mutase (CMU1) from Mycosarcoma maydis (Corn smut fungus).